The chain runs to 218 residues: Glutathione S-transferase Mu 3 (218 aa).

One can recognise a GST N-terminal domain in the interval 2–88 (PMTLGYWNTR…YLGRKHNLCG (87 aa)). Residues 7–8 (YW), 46–50 (WLSEK), and 59–60 (NL) contribute to the glutathione site. Residue K50 forms a Glycyl lysine isopeptide (Lys-Gly) (interchain with G-Cter in SUMO2) linkage. K69 participates in a covalent cross-link: Glycyl lysine isopeptide (Lys-Gly) (interchain with G-Cter in SUMO2). A glutathione-binding site is contributed by 72 to 73 (QS). In terms of domain architecture, GST C-terminal spans 90–208 (TEEERIRVDT…KSSRFLPRPV (119 aa)).

Belongs to the GST superfamily. Mu family. Homodimer.

Its subcellular location is the cytoplasm. The enzyme catalyses RX + glutathione = an S-substituted glutathione + a halide anion + H(+). Functionally, conjugation of reduced glutathione to a wide number of exogenous and endogenous hydrophobic electrophiles. This chain is Glutathione S-transferase Mu 3 (Gstm3), found in Mus musculus (Mouse).